Reading from the N-terminus, the 329-residue chain is Protein-arginine N-acetylglucosaminyltransferase NleB (329 aa).

Arg-13 is a glycosylation site (N-beta-linked (GlcNAc) arginine; by autocatalysis). 48-50 (QWF) is a binding site for UDP-N-acetyl-alpha-D-glucosamine. Arg-53 is a glycosylation site (N-beta-linked (GlcNAc) arginine; by autocatalysis). A UDP-N-acetyl-alpha-D-glucosamine-binding site is contributed by Tyr-72. Arg-159 carries N-beta-linked (GlcNAc) arginine; by autocatalysis glycosylation. 219-222 (YLDA) lines the UDP-N-acetyl-alpha-D-glucosamine pocket. The DXD motif motif lies at 221–223 (DAD). Asp-223 lines the Mn(2+) pocket. Glu-253 serves as the catalytic Proton acceptor. Arg-293 carries N-beta-linked (GlcNAc) arginine; by autocatalysis glycosylation. 2 residues coordinate Mn(2+): Asn-320 and Ser-322. UDP-N-acetyl-alpha-D-glucosamine is bound by residues Ser-322 and 327–329 (SSW).

It belongs to the glycosyltransferase NleB family. Requires Mn(2+) as cofactor. Auto-glycosylated: arginine GlcNAcylation is required for activity toward death domain-containing host target proteins.

It localises to the secreted. Its subcellular location is the host cell. The enzyme catalyses L-arginyl-[protein] + UDP-N-acetyl-alpha-D-glucosamine = N(omega)-(N-acetyl-beta-D-glucosaminyl)-L-arginyl-[protein] + UDP + H(+). Its function is as follows. Protein-arginine N-acetylglucosaminyltransferase effector that disrupts TNF signaling in infected cells, including NF-kappa-B signaling, apoptosis and necroptosis. Acts by catalyzing the transfer of a single N-acetylglucosamine (GlcNAc) to a conserved arginine residue in the death domain of host proteins FADD, TNFRSF1A and RIPK1: arginine GlcNAcylation prevents homotypic/heterotypic death domain interactions and assembly of the oligomeric TNF-alpha receptor complex, thereby disrupting TNF signaling. Has preference for host FADD as substrate compared to TNFRSF1A and RIPK1. Also acts on host proteins without a death domain: catalyzes GlcNAcylation of host GAPDH protein, thereby preventing GAPDH interaction with TRAF2 and TRAF3, leading to inhibit NF-kappa-B signaling and type I interferon production, respectively. Also displays intra-bacterial activity by mediating GlcNAcylation of glutathione synthetase GshB. Catalyzes auto-GlcNAcylation, which is required for activity toward death domain-containing host target proteins. This is Protein-arginine N-acetylglucosaminyltransferase NleB from Citrobacter rodentium.